We begin with the raw amino-acid sequence, 101 residues long: UPF0235 protein MMP1055 (101 aa).

Belongs to the UPF0235 family.

This chain is UPF0235 protein MMP1055, found in Methanococcus maripaludis (strain DSM 14266 / JCM 13030 / NBRC 101832 / S2 / LL).